A 173-amino-acid chain; its full sequence is DASH complex subunit SPC19 (173 aa).

Belongs to the DASH complex SPC19 family. In terms of assembly, component of the DASH complex consisting of ASK1, DAD1, DAD2, DAD3, DAD4, DAM1, DUO1, HSK3, SPC19 and SPC34, with a stoichiometry of one copy of each subunit per complex. Multiple DASH complexes oligomerize to form a ring that encircles spindle microtubules and organizes the rod-like NDC80 complexes of the outer kinetochore. DASH complex oligomerization strengthens microtubule attachments. On cytoplasmic microtubules, DASH complexes appear to form patches instead of rings.

Its subcellular location is the nucleus. The protein resides in the cytoplasm. The protein localises to the cytoskeleton. It is found in the spindle. It localises to the chromosome. Its subcellular location is the centromere. The protein resides in the kinetochore. Component of the DASH complex that connects microtubules with kinetochores and couples microtubule depolymerisation to chromosome movement; it is involved in retrieving kinetochores to the spindle poles before their re-orientation on the spindle in early mitosis and allows microtubule depolymerization to pull chromosomes apart and resist detachment during anaphase. Kinetochores, consisting of a centromere-associated inner segment and a microtubule-contacting outer segment, play a crucial role in chromosome segregation by mediating the physical connection between centromeric DNA and microtubules. Kinetochores also serve as an input point for the spindle assembly checkpoint, which delays anaphase until all chromosomes have bioriented on the mitotic spindle. The sequence is that of DASH complex subunit SPC19 from Chaetomium thermophilum (strain DSM 1495 / CBS 144.50 / IMI 039719) (Thermochaetoides thermophila).